We begin with the raw amino-acid sequence, 213 residues long: AN1-type zinc finger protein 5 (213 aa).

Residues 8-42 form an A20-type zinc finger; the sequence is TPGPMLCSTGCGFYGNPRTNGMCSVCYKEHLQRQQ. Zn(2+) is bound by residues C14, C18, C30, and C33. A disordered region spans residues 39–149; the sequence is QRQQNSGRMS…EEKAPELPKP (111 aa). The segment covering 40 to 66 has biased composition (polar residues); sequence RQQNSGRMSPMGTASGSNSPTSDSASV. Phosphoserine is present on residues S48 and S58. The span at 120–138 shows a compositional bias: low complexity; it reads SEPVVTQPSPSVSQPSSSQ. Basic and acidic residues predominate over residues 139–148; sequence SEEKAPELPK. The AN1-type zinc-finger motif lies at 148–194; the sequence is KPKKNRCFMCRKKVGLTGFDCRCGNLFCGLHRYSDKHNCPYDYKAEA. Zn(2+)-binding residues include C154, C157, C168, C170, C175, H178, H184, and C186. The residue at position 209 (K209) is an N6-acetyllysine.

In terms of assembly, homooligomer and/or heterooligomer. Interacts (via A20-type domain) with IKBKG and RIPK1 and with TRAF6 (via AN1-type domain). Interacts with ubiquitin and polyubiquitinated proteins. Identified in a heterotrimeric complex with ubiquitin and SQSTM1, where ZFAND5 and SQSTM1 both interact with the same ubiquitin molecule.

It localises to the cytoplasm. Functionally, involved in protein degradation via the ubiquitin-proteasome system. May act by anchoring ubiquitinated proteins to the proteasome. Plays a role in ubiquitin-mediated protein degradation during muscle atrophy. Plays a role in the regulation of NF-kappa-B activation and apoptosis. Inhibits NF-kappa-B activation triggered by overexpression of RIPK1 and TRAF6 but not of RELA. Also inhibits tumor necrosis factor (TNF), IL-1 and TLR4-induced NF-kappa-B activation in a dose-dependent manner. Overexpression sensitizes cells to TNF-induced apoptosis. Is a potent inhibitory factor for osteoclast differentiation. This chain is AN1-type zinc finger protein 5 (Zfand5), found in Rattus norvegicus (Rat).